Consider the following 95-residue polypeptide: Protein RALF-like 16 (95 aa).

The first 29 residues, 1–29 (MVAYEKSPIVFLFATMMLVMFLFCGSGEA), serve as a signal peptide directing secretion. Intrachain disulfides connect Cys-45/Cys-53 and Cys-65/Cys-71.

This sequence belongs to the plant rapid alkalinization factor (RALF) family.

It localises to the secreted. Its function is as follows. Cell signaling peptide that may regulate plant stress, growth, and development. Mediates a rapid alkalinization of extracellular space by mediating a transient increase in the cytoplasmic Ca(2+) concentration leading to a calcium-dependent signaling events through a cell surface receptor and a concomitant activation of some intracellular mitogen-activated protein kinases. This Arabidopsis thaliana (Mouse-ear cress) protein is Protein RALF-like 16 (RALFL16).